We begin with the raw amino-acid sequence, 133 residues long: Small ribosomal subunit protein uS11 (133 aa).

Positions 114–133 (VTPIPHDGTRPPGGKRGRRV) are disordered.

It belongs to the universal ribosomal protein uS11 family. Part of the 30S ribosomal subunit.

In terms of biological role, located on the platform of the 30S subunit. This is Small ribosomal subunit protein uS11 from Archaeoglobus fulgidus (strain ATCC 49558 / DSM 4304 / JCM 9628 / NBRC 100126 / VC-16).